The primary structure comprises 336 residues: Cell division protein ZipA (336 aa).

The Periplasmic portion of the chain corresponds to 1–2 (ME). The helical transmembrane segment at 3–23 (LHILFFILAGLLIAVLIGFSL) threads the bilayer. Over 24–336 (WSARREKSRI…SRQAYLARVS (313 aa)) the chain is Cytoplasmic.

Belongs to the ZipA family. As to quaternary structure, interacts with FtsZ via their C-terminal domains.

Its subcellular location is the cell inner membrane. Its function is as follows. Essential cell division protein that stabilizes the FtsZ protofilaments by cross-linking them and that serves as a cytoplasmic membrane anchor for the Z ring. Also required for the recruitment to the septal ring of downstream cell division proteins. This is Cell division protein ZipA from Actinobacillus pleuropneumoniae serotype 5b (strain L20).